A 142-amino-acid polypeptide reads, in one-letter code: Large ribosomal subunit protein uL13 (142 aa).

Belongs to the universal ribosomal protein uL13 family. As to quaternary structure, part of the 50S ribosomal subunit.

In terms of biological role, this protein is one of the early assembly proteins of the 50S ribosomal subunit, although it is not seen to bind rRNA by itself. It is important during the early stages of 50S assembly. The protein is Large ribosomal subunit protein uL13 of Janthinobacterium sp. (strain Marseille) (Minibacterium massiliensis).